The sequence spans 347 residues: UDP-N-acetylenolpyruvoylglucosamine reductase (347 aa).

The FAD-binding PCMH-type domain maps to 27 to 197; sequence LPARAQRLAR…TGIELRLNKM (171 aa). Residue arginine 173 is part of the active site. Catalysis depends on serine 247, which acts as the Proton donor. Residue glutamate 342 is part of the active site.

This sequence belongs to the MurB family. Requires FAD as cofactor.

The protein resides in the cytoplasm. It catalyses the reaction UDP-N-acetyl-alpha-D-muramate + NADP(+) = UDP-N-acetyl-3-O-(1-carboxyvinyl)-alpha-D-glucosamine + NADPH + H(+). It participates in cell wall biogenesis; peptidoglycan biosynthesis. Functionally, cell wall formation. In Alcanivorax borkumensis (strain ATCC 700651 / DSM 11573 / NCIMB 13689 / SK2), this protein is UDP-N-acetylenolpyruvoylglucosamine reductase.